Reading from the N-terminus, the 288-residue chain is Beta-lactamase CARB-4 (288 aa).

An N-terminal signal peptide occupies residues 1 to 17 (MKLLLVFSLLIPSMVFA). S65 functions as the Acyl-ester intermediate in the catalytic mechanism. C72 and C118 are oxidised to a cystine. 229-231 (RSG) is a substrate binding site.

This sequence belongs to the class-A beta-lactamase family.

It catalyses the reaction a beta-lactam + H2O = a substituted beta-amino acid. Inhibited by clavulanic acid and sulbactam. Hydrolyzes carbenicillin. Methicillin and oxacillin are weakly hydrolyzed. The chain is Beta-lactamase CARB-4 (carB4) from Pseudomonas aeruginosa.